Reading from the N-terminus, the 35-residue chain is Photosystem II reaction center protein T (35 aa).

A helical transmembrane segment spans residues 3-23; it reads ALVYTFLLISTLGIIFFAIFF.

This sequence belongs to the PsbT family. In terms of assembly, PSII is composed of 1 copy each of membrane proteins PsbA, PsbB, PsbC, PsbD, PsbE, PsbF, PsbH, PsbI, PsbJ, PsbK, PsbL, PsbM, PsbT, PsbY, PsbZ, Psb30/Ycf12, at least 3 peripheral proteins of the oxygen-evolving complex and a large number of cofactors. It forms dimeric complexes.

It localises to the plastid. It is found in the chloroplast thylakoid membrane. Found at the monomer-monomer interface of the photosystem II (PS II) dimer, plays a role in assembly and dimerization of PSII. PSII is a light-driven water plastoquinone oxidoreductase, using light energy to abstract electrons from H(2)O, generating a proton gradient subsequently used for ATP formation. The protein is Photosystem II reaction center protein T of Aristolochia macrophylla (Dutchman's pipe vine).